The primary structure comprises 208 residues: Uracil phosphoribosyltransferase (208 aa).

5-phospho-alpha-D-ribose 1-diphosphate contacts are provided by residues arginine 78, arginine 103, and 130–138 (DPMLATGGS). Residues isoleucine 193 and 198 to 200 (GDA) contribute to the uracil site. Aspartate 199 is a 5-phospho-alpha-D-ribose 1-diphosphate binding site.

It belongs to the UPRTase family. The cofactor is Mg(2+).

It catalyses the reaction UMP + diphosphate = 5-phospho-alpha-D-ribose 1-diphosphate + uracil. It participates in pyrimidine metabolism; UMP biosynthesis via salvage pathway; UMP from uracil: step 1/1. Allosterically activated by GTP. Functionally, catalyzes the conversion of uracil and 5-phospho-alpha-D-ribose 1-diphosphate (PRPP) to UMP and diphosphate. The sequence is that of Uracil phosphoribosyltransferase from Trichlorobacter lovleyi (strain ATCC BAA-1151 / DSM 17278 / SZ) (Geobacter lovleyi).